Reading from the N-terminus, the 109-residue chain is Urocortin-2 (109 aa).

An N-terminal signal peptide occupies residues 1–22 (MTRWALVVFMVLMLDRVPGTPI). Positions 23–67 (PTFQLLPQNYPETTPSSVSSESPSDTTTGPSASWSNSKASPYLDT) are excised as a propeptide. The interval 24–60 (TFQLLPQNYPETTPSSVSSESPSDTTTGPSASWSNSK) is disordered. The segment covering 33–50 (PETTPSSVSSESPSDTTT) has biased composition (low complexity). The segment covering 51-60 (GPSASWSNSK) has biased composition (polar residues). At Val106 the chain carries Valine amide; partial.

It belongs to the sauvagine/corticotropin-releasing factor/urotensin I family. Binds with high affinity to CRF receptors 2-alpha and 2-beta. Glycosylated.

The protein resides in the secreted. Suppresses food intake, delays gastric emptying and decreases heat-induced edema. Might represent an endogenous ligand for maintaining homeostasis after stress. The sequence is that of Urocortin-2 (Ucn2) from Rattus norvegicus (Rat).